The chain runs to 319 residues: MTDAPGFPLFPHPHLLGIKGLSPADIELLLERADAAVAISRRPEKKLATLRGRTQINLFFEASTRTQSSFELAGKRLGADVMNMSVASSSTKKGETLLDTAMTLNAMRPDILVVRHSAAGAAALLAQKVGCSVVNAGDGAHEHPTQALLDALTIRRKKGSIAGLVVAICGDVLHSRVARSNILLLNALGARVRVIAPSTLLPSGIGQMGVEPFTKMGEGLAGADVVMMLRLQRERMAGTFVPSVREYFRFFGLDAEKLKAAKEDALVMHPGPMNRGVEIASEVADGPQSVIQEQVEMGVAVRMAVMEALLDPRRNGDGA.

Positions 65 and 66 each coordinate carbamoyl phosphate. Lys93 contributes to the L-aspartate binding site. Carbamoyl phosphate contacts are provided by Arg115, His143, and Gln146. L-aspartate-binding residues include Arg176 and Arg230. The carbamoyl phosphate site is built by Gly271 and Pro272.

Belongs to the aspartate/ornithine carbamoyltransferase superfamily. ATCase family. Heterododecamer (2C3:3R2) of six catalytic PyrB chains organized as two trimers (C3), and six regulatory PyrI chains organized as three dimers (R2).

It catalyses the reaction carbamoyl phosphate + L-aspartate = N-carbamoyl-L-aspartate + phosphate + H(+). It functions in the pathway pyrimidine metabolism; UMP biosynthesis via de novo pathway; (S)-dihydroorotate from bicarbonate: step 2/3. In terms of biological role, catalyzes the condensation of carbamoyl phosphate and aspartate to form carbamoyl aspartate and inorganic phosphate, the committed step in the de novo pyrimidine nucleotide biosynthesis pathway. In Chelativorans sp. (strain BNC1), this protein is Aspartate carbamoyltransferase catalytic subunit.